Consider the following 404-residue polypeptide: S-adenosylmethionine synthase (404 aa).

Residues 1–13 (MSQSRYFFTSESV) show a composition bias toward polar residues. The disordered stretch occupies residues 1-20 (MSQSRYFFTSESVSEGHPDK). Residue histidine 17 participates in ATP binding. Aspartate 19 contributes to the Mg(2+) binding site. Glutamate 45 lines the K(+) pocket. 2 residues coordinate L-methionine: glutamate 58 and glutamine 101. The flexible loop stretch occupies residues 101-111 (QSPDINRGVDR). ATP is bound by residues 172 to 174 (DAK), 245 to 246 (RF), aspartate 254, 260 to 261 (RK), alanine 277, and lysine 281. Aspartate 254 contacts L-methionine. L-methionine is bound at residue lysine 285.

It belongs to the AdoMet synthase family. Homotetramer; dimer of dimers. Mg(2+) is required as a cofactor. The cofactor is K(+).

The protein resides in the cytoplasm. It carries out the reaction L-methionine + ATP + H2O = S-adenosyl-L-methionine + phosphate + diphosphate. The protein operates within amino-acid biosynthesis; S-adenosyl-L-methionine biosynthesis; S-adenosyl-L-methionine from L-methionine: step 1/1. Catalyzes the formation of S-adenosylmethionine (AdoMet) from methionine and ATP. The overall synthetic reaction is composed of two sequential steps, AdoMet formation and the subsequent tripolyphosphate hydrolysis which occurs prior to release of AdoMet from the enzyme. This is S-adenosylmethionine synthase from Chlorobium limicola (strain DSM 245 / NBRC 103803 / 6330).